Here is a 281-residue protein sequence, read N- to C-terminus: 2,3,4,5-tetrahydropyridine-2,6-dicarboxylate N-succinyltransferase (281 aa).

Substrate contacts are provided by arginine 108 and aspartate 145.

This sequence belongs to the transferase hexapeptide repeat family. In terms of assembly, homotrimer.

It is found in the cytoplasm. The enzyme catalyses (S)-2,3,4,5-tetrahydrodipicolinate + succinyl-CoA + H2O = (S)-2-succinylamino-6-oxoheptanedioate + CoA. It functions in the pathway amino-acid biosynthesis; L-lysine biosynthesis via DAP pathway; LL-2,6-diaminopimelate from (S)-tetrahydrodipicolinate (succinylase route): step 1/3. This Rhodopseudomonas palustris (strain BisA53) protein is 2,3,4,5-tetrahydropyridine-2,6-dicarboxylate N-succinyltransferase.